The following is an 873-amino-acid chain: Tyrosine-protein kinase transforming protein Fps (873 aa).

Residues 1 to 46 are disordered; sequence ASGQLHRPQPQEHTSTSAAAGTWRLTQASESRHRLPHCSAAPSHQD. The segment covering 11–29 has biased composition (polar residues); the sequence is QEHTSTSAAAGTWRLTQAS. The F-BAR domain occupies 50–313; that stretch reads MGFGPELWCP…AVEMIDPATE (264 aa). Residues 445–471 form a disordered region; that stretch reads GSEEPPPALPLQEDRQSARSTDQERSG. A compositionally biased stretch (basic and acidic residues) spans 456–469; that stretch reads QEDRQSARSTDQER. In terms of domain architecture, SH2 spans 511-600; sequence WYHGAIPRSE…KSGIVLTRAV (90 aa). The Protein kinase domain occupies 612 to 865; that stretch reads VLLGERIGRG…PSFGAVHQDL (254 aa). ATP contacts are provided by residues 618–626 and Lys-641; that span reads IGRGNFGEV. Asp-734 serves as the catalytic Proton acceptor. The residue at position 764 (Tyr-764) is a Phosphotyrosine; by autocatalysis.

This sequence belongs to the protein kinase superfamily. Tyr protein kinase family. Fes/fps subfamily.

The catalysed reaction is L-tyrosyl-[protein] + ATP = O-phospho-L-tyrosyl-[protein] + ADP + H(+). This is Tyrosine-protein kinase transforming protein Fps (V-FPS) from Gallus gallus (Chicken).